Consider the following 150-residue polypeptide: Protein Smg homolog (150 aa).

Belongs to the Smg family.

In Methylobacillus flagellatus (strain ATCC 51484 / DSM 6875 / VKM B-1610 / KT), this protein is Protein Smg homolog.